The primary structure comprises 424 residues: Probable serine/threonine-protein kinase PBL15 (424 aa).

The Protein kinase domain occupies 99 to 380 (FSGNYLLGEG…AVVEALESLI (282 aa)). ATP-binding positions include 105–113 (LGEGGFGKV) and lysine 134. Phosphotyrosine is present on tyrosine 179. Catalysis depends on aspartate 229, which acts as the Proton acceptor. Residue serine 233 is modified to Phosphoserine. 2 positions are modified to phosphothreonine: threonine 264 and threonine 269. Phosphotyrosine is present on tyrosine 277. Residues 390-424 (GHWPLSPKSQGGKVSPKVRGDHRSGRKSAPGSLRS) form a disordered region.

The protein belongs to the protein kinase superfamily. Ser/Thr protein kinase family. Interacts with the Xanthomonas campestris effector XopAC/AvrAC.

Its subcellular location is the cell membrane. It carries out the reaction L-seryl-[protein] + ATP = O-phospho-L-seryl-[protein] + ADP + H(+). The enzyme catalyses L-threonyl-[protein] + ATP = O-phospho-L-threonyl-[protein] + ADP + H(+). Its function is as follows. May be involved in plant defense signaling. The sequence is that of Probable serine/threonine-protein kinase PBL15 from Arabidopsis thaliana (Mouse-ear cress).